Reading from the N-terminus, the 424-residue chain is MTAITDIIAREILDSRGNPTVEVDVYLEDGSMGRAAVPSGASTGAHEAVELRDGGKRYLGKGVEKAVEAVNTEIFDAIGGFDAENQIQIDQMMIALDGTPNKSRLGANAILGVSLAIAKAAAEASGLPLYRYVGGPNAHLLPVPMMNIINGGAHADNPIDFQEFMILPVGAENIREAVRMGSEVFHTLKKELSAQGHNTNVGDEGGFAPGLESAPAALDFIMKSIEKAGYRPGEDMYVGLDCASTEFFKDGKYVLEGEGRTLEPGAMAEYLAELVNKYPIISVEDGMAEDDWEGWKTLTDLVGNKCQLVGDDLFVTNSARLRDGIKMGVANSILVKVNQIGSLSETLDAVETAHKAGYTAVMSHRSGETEDSTIADLAVATNCGQIKTGSLARSDRLAKYNQLIRIEEMLGPQAAYAGRSILRG.

Position 162 (Q162) interacts with (2R)-2-phosphoglycerate. The active-site Proton donor is the E204. Mg(2+) contacts are provided by D241, E284, and D311. Residues K336, R365, S366, and K387 each coordinate (2R)-2-phosphoglycerate. The active-site Proton acceptor is the K336.

It belongs to the enolase family. The cofactor is Mg(2+).

Its subcellular location is the cytoplasm. The protein resides in the secreted. The protein localises to the cell surface. It carries out the reaction (2R)-2-phosphoglycerate = phosphoenolpyruvate + H2O. Its pathway is carbohydrate degradation; glycolysis; pyruvate from D-glyceraldehyde 3-phosphate: step 4/5. Catalyzes the reversible conversion of 2-phosphoglycerate (2-PG) into phosphoenolpyruvate (PEP). It is essential for the degradation of carbohydrates via glycolysis. The chain is Enolase from Agrobacterium fabrum (strain C58 / ATCC 33970) (Agrobacterium tumefaciens (strain C58)).